Here is a 119-residue protein sequence, read N- to C-terminus: Protein TusC (119 aa).

It belongs to the DsrF/TusC family. In terms of assembly, heterohexamer, formed by a dimer of trimers. The hexameric TusBCD complex contains 2 copies each of TusB, TusC and TusD. The TusBCD complex interacts with TusE.

The protein resides in the cytoplasm. In terms of biological role, part of a sulfur-relay system required for 2-thiolation of 5-methylaminomethyl-2-thiouridine (mnm(5)s(2)U) at tRNA wobble positions. The sequence is that of Protein TusC from Buchnera aphidicola subsp. Acyrthosiphon pisum (strain APS) (Acyrthosiphon pisum symbiotic bacterium).